An 89-amino-acid chain; its full sequence is Small ribosomal subunit protein uS14A (89 aa).

This sequence belongs to the universal ribosomal protein uS14 family. In terms of assembly, part of the 30S ribosomal subunit. Contacts proteins S3 and S10.

Binds 16S rRNA, required for the assembly of 30S particles and may also be responsible for determining the conformation of the 16S rRNA at the A site. The sequence is that of Small ribosomal subunit protein uS14A from Pediococcus pentosaceus (strain ATCC 25745 / CCUG 21536 / LMG 10740 / 183-1w).